The primary structure comprises 211 residues: Pyridoxine/pyridoxamine 5'-phosphate oxidase (211 aa).

Residues 8–11 (RKNY) and Lys66 contribute to the substrate site. FMN is bound by residues 61–66 (RIVLLK), 76–77 (FT), Lys83, and Gln105. 3 residues coordinate substrate: Tyr123, Arg127, and Ser131. Residues 140-141 (QS) and Trp184 contribute to the FMN site. Substrate is bound at residue 190 to 192 (RLH). Arg194 contributes to the FMN binding site.

This sequence belongs to the pyridoxamine 5'-phosphate oxidase family. Homodimer. The cofactor is FMN.

The enzyme catalyses pyridoxamine 5'-phosphate + O2 + H2O = pyridoxal 5'-phosphate + H2O2 + NH4(+). The catalysed reaction is pyridoxine 5'-phosphate + O2 = pyridoxal 5'-phosphate + H2O2. Its pathway is cofactor metabolism; pyridoxal 5'-phosphate salvage; pyridoxal 5'-phosphate from pyridoxamine 5'-phosphate: step 1/1. It participates in cofactor metabolism; pyridoxal 5'-phosphate salvage; pyridoxal 5'-phosphate from pyridoxine 5'-phosphate: step 1/1. Its function is as follows. Catalyzes the oxidation of either pyridoxine 5'-phosphate (PNP) or pyridoxamine 5'-phosphate (PMP) into pyridoxal 5'-phosphate (PLP). The polypeptide is Pyridoxine/pyridoxamine 5'-phosphate oxidase (Polynucleobacter asymbioticus (strain DSM 18221 / CIP 109841 / QLW-P1DMWA-1) (Polynucleobacter necessarius subsp. asymbioticus)).